The chain runs to 471 residues: Glutamate--tRNA ligase (471 aa).

The 'HIGH' region signature appears at 9–19 (PSPTGYLHVGG). Positions 98, 100, 125, and 127 each coordinate Zn(2+). The 'KMSKS' region motif lies at 237–241 (KLSKR). Lysine 240 lines the ATP pocket.

The protein belongs to the class-I aminoacyl-tRNA synthetase family. Glutamate--tRNA ligase type 1 subfamily. In terms of assembly, monomer. Zn(2+) serves as cofactor.

The protein resides in the cytoplasm. It catalyses the reaction tRNA(Glu) + L-glutamate + ATP = L-glutamyl-tRNA(Glu) + AMP + diphosphate. Its function is as follows. Catalyzes the attachment of glutamate to tRNA(Glu) in a two-step reaction: glutamate is first activated by ATP to form Glu-AMP and then transferred to the acceptor end of tRNA(Glu). In Shigella boydii serotype 4 (strain Sb227), this protein is Glutamate--tRNA ligase.